The following is a 411-amino-acid chain: Tetra-peptide repeat homeobox protein 1 (411 aa).

A DNA-binding region (homeobox) is located at residues 3–24 (SLREQQLQVWFKNRRAKLARER). 4 disordered regions span residues 20–63 (LARE…SGIL), 88–246 (IPAA…ISGP), 286–340 (PILS…SPDA), and 363–411 (LEGS…LLDL). Positions 27–55 (QQQPQRVPGQRGRGARAAPLVPAASASAP) are enriched in low complexity. Composition is skewed to pro residues over residues 95–139 (GPGP…PGPI) and 149–246 (FRGP…ISGP). The span at 295-307 (SPGSLPGLAPILG) shows a compositional bias: low complexity. Pro residues predominate over residues 319 to 335 (APIPGPGSLPAPAPLWP). 2 stretches are compositionally biased toward polar residues: residues 366-376 (SSVSTMTSQYQ) and 388-402 (GSQPQEEGGSVNENH).

Belongs to the paired homeobox family.

The protein localises to the nucleus. Transcription factor expressed after fertilization required for zygotic genome activation (ZGA), a critical event in early embryonic development during which the developmental control passes from maternally provided mRNAs to the expression of the zygotic genome after fertilization. Binds and activates expression of key ZGA marker genes, such as NANOGNB, ZSCAN4, DUXB, KLF5 and DPPA3. Binds to regulatory DNA sequences containing a 5'-TAATCC-3' sequence motif. The sequence is that of Tetra-peptide repeat homeobox protein 1 from Homo sapiens (Human).